We begin with the raw amino-acid sequence, 237 residues long: Uridylate kinase (237 aa).

10–13 is a binding site for ATP; sequence KLSG. Gly51 provides a ligand contact to UMP. Gly52 and Arg56 together coordinate ATP. Residues Asp71 and 133-140 contribute to the UMP site; that span reads TGNPCFTT. 3 residues coordinate ATP: Thr160, Tyr166, and Asp169.

Belongs to the UMP kinase family. As to quaternary structure, homohexamer.

The protein resides in the cytoplasm. It catalyses the reaction UMP + ATP = UDP + ADP. It participates in pyrimidine metabolism; CTP biosynthesis via de novo pathway; UDP from UMP (UMPK route): step 1/1. Inhibited by UTP. In terms of biological role, catalyzes the reversible phosphorylation of UMP to UDP. The chain is Uridylate kinase from Vesicomyosocius okutanii subsp. Calyptogena okutanii (strain HA).